A 536-amino-acid polypeptide reads, in one-letter code: MACSWTFLWLLWIALVAVLLFALRGPLKISESLESVTATSYFNNLTPKFYVALTGTSSLVSGIILIFEWWYFKNNAGIDAGDEEGSDNDESIENTKTVPECKVWRNPMALFRAAEYNRFRKETNSEPLTYYDMNLSAQDHQSLFMCDEDQGRAEYEIMQVAWRERESEERIQTARAALAINPECASALVLLAEEESETVSQAENLLRRALRAIESTLNSYSNNQIASYAQNGDAVRKRDLTIQTYIKRRLAMCARKQGRLREAIKGFRDLSRDQSLSTLLSVQDNLIEACLEVQAYADVQNLLVRYDGYGAPCSYELREPRSAAMSYTSALLKVRAVAENFRCAADSSIRRGLSSAEQTAIEALTRAMEFNPHVPPYLLELRSMIMPPEHFLKRGDSEALAYAFFHIQHWKRIDGALQLLSIVWKDFVPKVSKDKNAFSSQLESADKELLPSWHEQSVFPKTEGTLMMLLQTFICLAICILAVLAQQFPASSGEIFRTAATIGMQFYENSVYTVSQWAPGNIIPYLASKQVPVPEL.

A run of 2 helical transmembrane segments spans residues 3–23 (CSWTFLWLLWIALVAVLLFAL) and 49–69 (FYVALTGTSSLVSGIILIFEW). Residues 191-218 (LAEEESETVSQAENLLRRALRAIESTLN) adopt a coiled-coil conformation. A helical transmembrane segment spans residues 465–485 (TLMMLLQTFICLAICILAVLA).

The protein belongs to the ST7 family.

It localises to the membrane. This Caenorhabditis elegans protein is Protein ST7 homolog.